The following is a 171-amino-acid chain: Transcription antitermination protein NusB (171 aa).

The protein belongs to the NusB family.

In terms of biological role, involved in transcription antitermination. Required for transcription of ribosomal RNA (rRNA) genes. Binds specifically to the boxA antiterminator sequence of the ribosomal RNA (rrn) operons. The protein is Transcription antitermination protein NusB of Pelodictyon phaeoclathratiforme (strain DSM 5477 / BU-1).